Consider the following 106-residue polypeptide: Testis-specific basic protein Y 2 (106 aa).

It belongs to the VCX/VCY family. Interacts with MAP1S. Interacts with UBE3A (via HECT domain). As to expression, expressed exclusively in testis. Expressed in ejaculated spermatozoa of germ cell. Expressed in the nuclei of spermatogonia, spermatocytes, and round spermatids, except elongated spermatids (at protein level).

The sequence is that of Testis-specific basic protein Y 2 (BPY2) from Homo sapiens (Human).